Reading from the N-terminus, the 341-residue chain is MSHKDEEDRGPWHGRIDVHEGPRALRWHQCVKMLAPEAPPGIVLLGFPCDLGVRRNHGRAGAAEGPAALRRTLANLAWHGEWPVYDAGDAGDVGASTHDAGEQTLETMQGDYARRITALLEAGHVPIGLGGGHEIAWAAWQGFAVHAIREPHPPRIGILNVDAHFDLRTAPAGNSGTPFRQIAADCGVRDWNFRYCVLGIAEAANTAALFDRARALGVAFRLDEEMGARDLDATASTVRDFLAGIDWLYLTLCLDALSGACAPGVSAPATIGVEPAVVEAVIRIAVASGKLRLADVAELNPSLDPDGRTARLAARLVWRLAREIARRPCDVRSGLHLPARD.

Mn(2+)-binding residues include His-133, Asp-162, His-164, Asp-166, Cys-253, and Asp-255.

The protein belongs to the arginase family. It depends on Mn(2+) as a cofactor.

It carries out the reaction N-formimidoyl-L-glutamate + H2O = formamide + L-glutamate. It participates in amino-acid degradation; L-histidine degradation into L-glutamate; L-glutamate from N-formimidoyl-L-glutamate (hydrolase route): step 1/1. In terms of biological role, catalyzes the conversion of N-formimidoyl-L-glutamate to L-glutamate and formamide. The protein is Formimidoylglutamase of Aromatoleum aromaticum (strain DSM 19018 / LMG 30748 / EbN1) (Azoarcus sp. (strain EbN1)).